The primary structure comprises 359 residues: Dihydroorotate dehydrogenase (quinone) (359 aa).

FMN is bound by residues 68 to 72 (AGFDK) and Thr92. Lys72 contributes to the substrate binding site. Residue 117 to 121 (NRMGF) coordinates substrate. Residues Asn145 and Asn176 each contribute to the FMN site. Asn176 contacts substrate. The active-site Nucleophile is the Ser179. A substrate-binding site is contributed by Asn181. Residues Lys212 and Thr240 each coordinate FMN. 241-242 (NT) serves as a coordination point for substrate. FMN contacts are provided by residues Gly266, Gly295, and 316-317 (YT).

Belongs to the dihydroorotate dehydrogenase family. Type 2 subfamily. In terms of assembly, monomer. Requires FMN as cofactor.

The protein localises to the cell membrane. The catalysed reaction is (S)-dihydroorotate + a quinone = orotate + a quinol. Its pathway is pyrimidine metabolism; UMP biosynthesis via de novo pathway; orotate from (S)-dihydroorotate (quinone route): step 1/1. In terms of biological role, catalyzes the conversion of dihydroorotate to orotate with quinone as electron acceptor. In Corynebacterium striatum, this protein is Dihydroorotate dehydrogenase (quinone).